Consider the following 610-residue polypeptide: Dopamine beta-hydroxylase (610 aa).

Topologically, residues methionine 1–arginine 9 are cytoplasmic. The helical; Signal-anchor for type II membrane protein transmembrane segment at glutamate 10–leucine 30 threads the bilayer. Residues glutamine 31–glycine 610 are Intragranular-facing. Residues glycine 50–leucine 166 form the DOMON domain. 3 N-linked (GlcNAc...) asparagine glycosylation sites follow: asparagine 57, asparagine 177, and asparagine 194. 6 cysteine pairs are disulfide-bonded: cysteine 147-cysteine 589, cysteine 225-cysteine 276, cysteine 262-cysteine 288, cysteine 383-cysteine 496, cysteine 387-cysteine 558, and cysteine 459-cysteine 481. Tyrosine 223 is a catalytic residue. The Cu(2+) site is built by histidine 255 and histidine 256. 4 residues coordinate Cu(2+): histidine 326, histidine 405, histidine 407, and methionine 480. Histidine 405 is an active-site residue. Residues threonine 586–glycine 610 are disordered.

The protein belongs to the copper type II ascorbate-dependent monooxygenase family. In terms of assembly, homotetramer; composed of two disulfide-linked dimers. Cu(2+) is required as a cofactor. In terms of processing, proteolytic cleavage after the membrane-anchor leads to the release of the soluble form. N-glycosylated. Detected in adrenal medulla chromaffin cells.

The protein localises to the cytoplasmic vesicle. It localises to the secretory vesicle lumen. It is found in the secretory vesicle. The protein resides in the chromaffin granule lumen. Its subcellular location is the secreted. The protein localises to the secretory vesicle membrane. It localises to the chromaffin granule membrane. It catalyses the reaction dopamine + 2 L-ascorbate + O2 = (R)-noradrenaline + 2 monodehydro-L-ascorbate radical + H2O. The protein operates within catecholamine biosynthesis; (R)-noradrenaline biosynthesis; (R)-noradrenaline from dopamine: step 1/1. Its function is as follows. Catalyzes the hydroxylation of dopamine to noradrenaline (also known as norepinephrine), and is thus vital for regulation of these neurotransmitters. The polypeptide is Dopamine beta-hydroxylase (DBH) (Equus caballus (Horse)).